Consider the following 519-residue polypeptide: Major facilitator superfamily domain-containing protein 8 (519 aa).

Positions 1-25 (MANLGSEAEREPLLGPGSPGSREWS) are disordered. The Cytoplasmic segment spans residues 1-41 (MANLGSEAEREPLLGPGSPGSREWSEIETQEHYKSRWKSVR). The Dileucine internalization motif motif lies at 13 to 14 (LL). The helical transmembrane segment at 42–62 (ILYLTMFLSSVGFSIVIMSIW) threads the bilayer. The Extracellular portion of the chain corresponds to 63-75 (PYLQKIDQTADAS). The helical transmembrane segment at 76 to 96 (FLGWVIASYSLGQMVASPLFG) threads the bilayer. The Cytoplasmic segment spans residues 97–106 (LWSNYRPRKE). The helical transmembrane segment at 107-127 (PLIVSISISVAANCLYAYVHV) threads the bilayer. Residues 128 to 140 (PAAHNKYYMLIAR) lie on the Extracellular side of the membrane. A helical membrane pass occupies residues 141 to 161 (GLVGFGAGNVAVVRSYIAGAT). At 162-174 (SLQERTNAMANTS) the chain is on the cytoplasmic side. Residues 175 to 195 (TCQALGFILGPVFQTCFALIG) form a helical membrane-spanning segment. At 196–212 (EKGVTWDIIKLQVNMYT) the chain is on the extracellular side. Residues 213 to 233 (APVLLAAFLGILNIILILFIL) traverse the membrane as a helical segment. Topologically, residues 234-267 (REHRVDDLGRQCKSVNFQEENTDEPQIPEGSIDQ) are cytoplasmic. A helical transmembrane segment spans residues 268–288 (VAVVATNIVFFVVLFIFAVYE). Topologically, residues 289–310 (TILTPLTLDMYAWTQEQAVLYD) are extracellular. Residues 311-331 (GILLVAFGVEAVLVFMGVKLL) traverse the membrane as a helical segment. The Cytoplasmic segment spans residues 332 to 338 (SKKIGER). The chain crosses the membrane as a helical span at residues 339-359 (AILLGGFVVVWVGFFILLPWG). At 360–416 (NQFPKIQWEDLHNSSTPNTTFGEIIIGLWNSSREDHSEQPTGCPIEQTWCLYTPVIH) the chain is on the extracellular side. Asparagine 372 and asparagine 377 each carry an N-linked (GlcNAc...) asparagine glycan. The helical transmembrane segment at 417 to 439 (LAQFLTAAVLIGTGYPACSVMSY) threads the bilayer. Over 440–452 (TLYSKVLGPKPQG) the chain is Cytoplasmic. A helical membrane pass occupies residues 453-473 (IYMGWLTTSGSAARILGPVFI). The Extracellular portion of the chain corresponds to 474-483 (SHVYTYLGPR). The chain crosses the membrane as a helical span at residues 484-504 (WAFSLVCGIVVLTILLIGAVY). At 505–519 (KRLVAFSVRYMRIQE) the chain is on the cytoplasmic side.

The protein belongs to the major facilitator superfamily.

The protein localises to the endosome membrane. Its subcellular location is the lysosome membrane. It carries out the reaction chloride(in) = chloride(out). The enzyme catalyses iodide(out) = iodide(in). The catalysed reaction is fluoride(in) = fluoride(out). Its function is as follows. Outward-rectifying chloride channel involved in endolysosomal chloride homeostasis, membrane fusion and function. Conducts chloride currents up to hundreds of picoamperes. Regulates lysosomal calcium content by reducing the lysosomal membrane potential, thereby activating TRPML1 channel and further release of lysosomal calcium ions. Regulates the pH in endolysosomal compartments and may contribute to progressive acidification from endosome to lysosome. Permeable to other halides such as iodide and fluoride ions. In Mus musculus (Mouse), this protein is Major facilitator superfamily domain-containing protein 8.